We begin with the raw amino-acid sequence, 131 residues long: Small ribosomal subunit protein uS8 (131 aa).

This sequence belongs to the universal ribosomal protein uS8 family. Part of the 30S ribosomal subunit. Contacts proteins S5 and S12.

Functionally, one of the primary rRNA binding proteins, it binds directly to 16S rRNA central domain where it helps coordinate assembly of the platform of the 30S subunit. This chain is Small ribosomal subunit protein uS8, found in Malacoplasma penetrans (strain HF-2) (Mycoplasma penetrans).